Consider the following 80-residue polypeptide: SPbeta prophage-derived uncharacterized HTH-type transcriptional regulator YotL (80 aa).

An HTH cro/C1-type domain is found at 12 to 67; it reads LNELMHEYSVSIEDLVECTGLSKQRINDYVGGFKSNMNIGTAMTFADAIGCSIEEL. A DNA-binding region (H-T-H motif) is located at residues 23-42; sequence IEDLVECTGLSKQRINDYVG.

This Bacillus subtilis (strain 168) protein is SPbeta prophage-derived uncharacterized HTH-type transcriptional regulator YotL (yotL).